A 408-amino-acid polypeptide reads, in one-letter code: Imidazolonepropionase (408 aa).

Residues histidine 73 and histidine 75 each contribute to the Fe(3+) site. Zn(2+) contacts are provided by histidine 73 and histidine 75. The 4-imidazolone-5-propanoate site is built by arginine 82, tyrosine 145, and histidine 178. Tyrosine 145 is an N-formimidoyl-L-glutamate binding site. Histidine 243 contributes to the Fe(3+) binding site. Position 243 (histidine 243) interacts with Zn(2+). A 4-imidazolone-5-propanoate-binding site is contributed by glutamine 246. Position 318 (aspartate 318) interacts with Fe(3+). Zn(2+) is bound at residue aspartate 318. N-formimidoyl-L-glutamate is bound by residues asparagine 320 and glycine 322. Serine 323 serves as a coordination point for 4-imidazolone-5-propanoate.

It belongs to the metallo-dependent hydrolases superfamily. HutI family. It depends on Zn(2+) as a cofactor. Requires Fe(3+) as cofactor.

The protein resides in the cytoplasm. The catalysed reaction is 4-imidazolone-5-propanoate + H2O = N-formimidoyl-L-glutamate. It functions in the pathway amino-acid degradation; L-histidine degradation into L-glutamate; N-formimidoyl-L-glutamate from L-histidine: step 3/3. Catalyzes the hydrolytic cleavage of the carbon-nitrogen bond in imidazolone-5-propanoate to yield N-formimidoyl-L-glutamate. It is the third step in the universal histidine degradation pathway. The polypeptide is Imidazolonepropionase (Shewanella oneidensis (strain ATCC 700550 / JCM 31522 / CIP 106686 / LMG 19005 / NCIMB 14063 / MR-1)).